Here is a 1044-residue protein sequence, read N- to C-terminus: Probable pre-mRNA-splicing factor ATP-dependent RNA helicase DEAH6 (1044 aa).

Disordered regions lie at residues E99–L134 and R152–D211. Over residues E157–E167 the composition is skewed to acidic residues. A compositionally biased stretch (basic and acidic residues) spans E168 to D211. The 164-residue stretch at L414 to P577 folds into the Helicase ATP-binding domain. G427 to T434 contacts ATP. Residues D524–H527 carry the DEAH box motif. In terms of domain architecture, Helicase C-terminal spans A599 to G775.

Belongs to the DEAD box helicase family. DEAH subfamily. PRP2 sub-subfamily. As to expression, predominantly expressed in flowers.

The catalysed reaction is ATP + H2O = ADP + phosphate + H(+). In terms of biological role, may be involved in pre-mRNA splicing. This chain is Probable pre-mRNA-splicing factor ATP-dependent RNA helicase DEAH6, found in Arabidopsis thaliana (Mouse-ear cress).